A 132-amino-acid chain; its full sequence is Small ribosomal subunit protein uS11 (132 aa).

Belongs to the universal ribosomal protein uS11 family. As to quaternary structure, part of the 30S ribosomal subunit.

Its function is as follows. Located on the platform of the 30S subunit. This Saccharolobus solfataricus (strain ATCC 35092 / DSM 1617 / JCM 11322 / P2) (Sulfolobus solfataricus) protein is Small ribosomal subunit protein uS11.